The following is a 519-amino-acid chain: Aldehyde dehydrogenase X, mitochondrial (519 aa).

The transit peptide at 1 to 19 (MLTARLLLPRLLCLQGRTT) directs the protein to the mitochondrion. Lys-53 carries the N6-acetyllysine modification. Lys-54 bears the N6-acetyllysine; alternate mark. Lys-54 carries the post-translational modification N6-succinyllysine; alternate. Lys-83 carries the post-translational modification N6-succinyllysine. NAD(+) is bound at residue 264-269 (GSTEVG). The Proton acceptor role is filled by Glu-287. Cys-321 serves as the catalytic Nucleophile. 5 positions are modified to N6-acetyllysine; alternate: Lys-366, Lys-385, Lys-401, Lys-416, and Lys-428. Lys-366, Lys-385, Lys-401, Lys-416, and Lys-428 each carry N6-succinyllysine; alternate. Lys-431 is modified (N6-acetyllysine).

Belongs to the aldehyde dehydrogenase family. In terms of assembly, homotetramer.

It is found in the mitochondrion matrix. It catalyses the reaction an aldehyde + NAD(+) + H2O = a carboxylate + NADH + 2 H(+). It participates in alcohol metabolism; ethanol degradation; acetate from ethanol: step 2/2. In terms of biological role, ALDHs play a major role in the detoxification of alcohol-derived acetaldehyde. They are involved in the metabolism of corticosteroids, biogenic amines, neurotransmitters, and lipid peroxidation. This chain is Aldehyde dehydrogenase X, mitochondrial (Aldh1b1), found in Mus musculus (Mouse).